A 225-amino-acid chain; its full sequence is Zinc finger protein 22 (225 aa).

The interval 1 to 35 (MRLGKPKGGISRSSSQGKVYENQRKTGRQRQRWGM) is disordered. Position 18 is an N6-acetyllysine (Lys-18). C2H2-type zinc fingers lie at residues 55–77 (YKCV…QKIH), 83–105 (HKCA…RRVH), 111–133 (YRCD…QRIH), 139–161 (YQCD…QRTH), and 167–189 (YQCS…TKVH). Residues 183 to 225 (RQHTKVHEEEKPRKTRGRSLRAKTHSLSSWKAGKGRRSAAGLR) form a disordered region. Basic residues predominate over residues 195–206 (RKTRGRSLRAKT).

This sequence belongs to the krueppel C2H2-type zinc-finger protein family.

It is found in the nucleus. Functionally, binds DNA through the consensus sequence 5'-CAATG-3'. May be involved in transcriptional regulation and may play a role in tooth formation. This chain is Zinc finger protein 22 (ZNF22), found in Bos taurus (Bovine).